The following is a 188-amino-acid chain: Adenine phosphoribosyltransferase (188 aa).

It belongs to the purine/pyrimidine phosphoribosyltransferase family. As to quaternary structure, homodimer.

Its subcellular location is the cytoplasm. The catalysed reaction is AMP + diphosphate = 5-phospho-alpha-D-ribose 1-diphosphate + adenine. The protein operates within purine metabolism; AMP biosynthesis via salvage pathway; AMP from adenine: step 1/1. Catalyzes a salvage reaction resulting in the formation of AMP, that is energically less costly than de novo synthesis. This Paraburkholderia phytofirmans (strain DSM 17436 / LMG 22146 / PsJN) (Burkholderia phytofirmans) protein is Adenine phosphoribosyltransferase.